Here is a 346-residue protein sequence, read N- to C-terminus: Trans-enoyl reductase FFUJ_12240 (346 aa).

Residue 40–43 (HDAK) participates in NADP(+) binding. Residue 124-131 (LAIATAGL) participates in substrate binding. Residues 157–160 (ATAT), 180–183 (SPSN), Tyr198, and 245–246 (LE) each bind NADP(+). 266–270 (APSIL) is a binding site for substrate. 335–336 (VH) lines the NADP(+) pocket.

Belongs to the zinc-containing alcohol dehydrogenase family.

Its function is as follows. Trans-enoyl reductase; part of the gene cluster that mediates the biosynthesis of fujikurins A-D, secondary metabolites playing a role during rice infection. The polyketide synthase PKS19 acts with the trans-enoyl reductase FFUJ_12240 and the polyketide transferase FFUJ_12241 to produce fujikurins, however, the biosynthesis pathway has not been identified yet. The chain is Trans-enoyl reductase FFUJ_12240 from Gibberella fujikuroi (strain CBS 195.34 / IMI 58289 / NRRL A-6831) (Bakanae and foot rot disease fungus).